Consider the following 152-residue polypeptide: Ubiquitin-conjugating enzyme E2 N (152 aa).

The UBC core domain maps to 3–149 (GLPRRIIKET…ARAWTRLYAM (147 aa)). N6-acetyllysine is present on Lys-82. Cys-87 acts as the Glycyl thioester intermediate in catalysis. Lys-92 participates in a covalent cross-link: Glycyl lysine isopeptide (Lys-Gly) (interchain with G-Cter in ISG15).

Belongs to the ubiquitin-conjugating enzyme family. In terms of assembly, heterodimer with UBE2V2. Interacts (UBE2V2-UBE2N heterodimer) with the E3 ligase STUB1 (via the U-box domain); the complex has a specific 'Lys-63'-linked polyubiquitination activity. Interacts with RNF8 and RNF168. Interacts with RNF11. Interacts with the E3 ligases, HLTF and SHPRH; the interactions promote the 'Lys-63'-linked polyubiquitination of PCNA upon genotoxic stress and lead to DNA repair. Interacts with ARIH2 (via RING-type 2). Interacts with OTUB1; leading to inhibit E2-conjugating activity. Interacts with RIGI and RNF135; involved in RIGI ubiquitination and activation. Post-translationally, conjugation to ISG15 impairs formation of the thioester bond with ubiquitin but not interaction with UBE2V2.

It carries out the reaction S-ubiquitinyl-[E1 ubiquitin-activating enzyme]-L-cysteine + [E2 ubiquitin-conjugating enzyme]-L-cysteine = [E1 ubiquitin-activating enzyme]-L-cysteine + S-ubiquitinyl-[E2 ubiquitin-conjugating enzyme]-L-cysteine.. Its pathway is protein modification; protein ubiquitination. With respect to regulation, activity is inhibited by binding to OTUB1, which prevents 'Lys-63'-linked polyubiquitination. Functionally, the UBE2V1-UBE2N and UBE2V2-UBE2N heterodimers catalyze the synthesis of non-canonical 'Lys-63'-linked polyubiquitin chains. This type of polyubiquitination does not lead to protein degradation by the proteasome. Mediates transcriptional activation of target genes. Plays a role in the control of progress through the cell cycle and differentiation. Plays a role in the error-free DNA repair pathway and contributes to the survival of cells after DNA damage. Acts together with the E3 ligases, HLTF and SHPRH, in the 'Lys-63'-linked poly-ubiquitination of PCNA upon genotoxic stress, which is required for DNA repair. Appears to act together with E3 ligase RNF5 in the 'Lys-63'-linked polyubiquitination of JKAMP thereby regulating JKAMP function by decreasing its association with components of the proteasome and ERAD. Promotes TRIM5 capsid-specific restriction activity and the UBE2V1-UBE2N heterodimer acts in concert with TRIM5 to generate 'Lys-63'-linked polyubiquitin chains which activate the MAP3K7/TAK1 complex which in turn results in the induction and expression of NF-kappa-B and MAPK-responsive inflammatory genes. Together with RNF135 and UB2V1, catalyzes the viral RNA-dependent 'Lys-63'-linked polyubiquitination of RIGI to activate the downstream signaling pathway that leads to interferon beta production. UBE2V1-UBE2N together with TRAF3IP2 E3 ubiquitin ligase mediate 'Lys-63'-linked polyubiquitination of TRAF6, a component of IL17A-mediated signaling pathway. This chain is Ubiquitin-conjugating enzyme E2 N (UBE2N), found in Macaca fascicularis (Crab-eating macaque).